Here is an 874-residue protein sequence, read N- to C-terminus: Cellulose synthase catalytic subunit [UDP-forming] (874 aa).

Helical transmembrane passes span 30 to 50 (SPFSAALGCLWTILAWIVFPL), 151 to 171 (ILGVIVTFSLILALICITQPF), 173 to 193 (PLSQFIFLLLLWGVALLVRRM), and 230 to 250 (LVCGLILLFAETYAWIVLVLG). The tract at residues 271 to 364 (QWPTVDIFVP…FVAIFDCDHV (94 aa)) is catalytic subdomain A. Residue Asp-313 is part of the active site. Substrate-binding residues include Asp-360 and Asp-362. The catalytic subdomain B stretch occupies residues 441-501 (KPLDEIGGIA…GQRIRWARGM (61 aa)). Asp-457 is a catalytic residue. The next 5 membrane-spanning stretches (helical) occupy residues 525-545 (LNAMFHFLSGIPRLIFLTAPL), 547-567 (FLLLHAYIIYAPALMIALFVI), 592-612 (IYETVLAWYIAPPTLVALINP), 634-654 (VISRPYIFLVLLNLLGVAAGV), and 668-688 (VIVSLVWVFYNLVILGGAVAV). The region spanning 694 to 790 (QVRRAHRVEI…QHIDFVQCTF (97 aa)) is the PilZ domain. The chain crosses the membrane as a helical span at residues 833 to 853 (SVKVIFRSLTALIAWIVSFIP).

Belongs to the glycosyltransferase 2 family. Mg(2+) is required as a cofactor.

It is found in the cell inner membrane. The catalysed reaction is [(1-&gt;4)-beta-D-glucosyl](n) + UDP-alpha-D-glucose = [(1-&gt;4)-beta-D-glucosyl](n+1) + UDP + H(+). It functions in the pathway glycan metabolism; bacterial cellulose biosynthesis. With respect to regulation, activated by bis-(3'-5') cyclic diguanylic acid (c-di-GMP). Functionally, catalytic subunit of cellulose synthase. It polymerizes uridine 5'-diphosphate glucose to cellulose, which is produced as an extracellular component for mechanical and chemical protection at the onset of the stationary phase, when the cells exhibit multicellular behavior (rdar morphotype). Coexpression of cellulose and thin aggregative fimbriae leads to a hydrophobic network with tightly packed cells embedded in a highly inert matrix. This chain is Cellulose synthase catalytic subunit [UDP-forming] (bcsA), found in Salmonella typhimurium (strain LT2 / SGSC1412 / ATCC 700720).